The chain runs to 200 residues: Holliday junction branch migration complex subunit RuvA (200 aa).

The segment at 1–63 (MFEYLTGLIT…EDAITLFGFA (63 aa)) is domain I. The tract at residues 64 to 142 (TQAEKRLFTQ…AVQDEVQLDF (79 aa)) is domain II. Positions 143 to 151 (TAPGPLGPS) are flexible linker. The domain III stretch occupies residues 151–200 (SAALQDALAALESLGYTTKQVERVQKQLEGLQGELSTNDYLSQGLKLLSR).

The protein belongs to the RuvA family. Homotetramer. Forms an RuvA(8)-RuvB(12)-Holliday junction (HJ) complex. HJ DNA is sandwiched between 2 RuvA tetramers; dsDNA enters through RuvA and exits via RuvB. An RuvB hexamer assembles on each DNA strand where it exits the tetramer. Each RuvB hexamer is contacted by two RuvA subunits (via domain III) on 2 adjacent RuvB subunits; this complex drives branch migration. In the full resolvosome a probable DNA-RuvA(4)-RuvB(12)-RuvC(2) complex forms which resolves the HJ.

The protein resides in the cytoplasm. In terms of biological role, the RuvA-RuvB-RuvC complex processes Holliday junction (HJ) DNA during genetic recombination and DNA repair, while the RuvA-RuvB complex plays an important role in the rescue of blocked DNA replication forks via replication fork reversal (RFR). RuvA specifically binds to HJ cruciform DNA, conferring on it an open structure. The RuvB hexamer acts as an ATP-dependent pump, pulling dsDNA into and through the RuvAB complex. HJ branch migration allows RuvC to scan DNA until it finds its consensus sequence, where it cleaves and resolves the cruciform DNA. This Limosilactobacillus fermentum (strain NBRC 3956 / LMG 18251) (Lactobacillus fermentum) protein is Holliday junction branch migration complex subunit RuvA.